The chain runs to 67 residues: Probable archaeal histone 3 (67 aa).

Interaction with DNA stretches follow at residues 20–22 (RVS) and 54–57 (KTVK).

This sequence belongs to the archaeal histone HMF family. Homodimer or heterodimer with another histone. Dimers then assemble into higher oligomers, with the DNA wrapped around the protein core.

It is found in the cytoplasm. The protein localises to the chromosome. In terms of biological role, binds and compact DNA (95 to 150 base pairs) to form nucleosome-like structures that contain positive DNA supercoils. Increases the resistance of DNA to thermal denaturation (in vitro). The chain is Probable archaeal histone 3 from Methanocaldococcus jannaschii (strain ATCC 43067 / DSM 2661 / JAL-1 / JCM 10045 / NBRC 100440) (Methanococcus jannaschii).